A 263-amino-acid chain; its full sequence is Versicolorin reductase 1 (263 aa).

Residues Ile22, Asp68, Asn95, and Arg128 each contribute to the NADP(+) site. Residues Ser144 and Ser145 each act as proton donor in the active site. Tyr159, Lys163, Ile192, and Thr194 together coordinate NADP(+). The Proton acceptor role is filled by Tyr159. The active-site Lowers pKa of active site Tyr is Lys163.

The protein belongs to the short-chain dehydrogenases/reductases (SDR) family.

Its subcellular location is the cytoplasm. It is found in the cytosol. The protein operates within mycotoxin biosynthesis. Functionally, versicolorin reductase; part of the fragmented gene cluster that mediates the biosynthesis of dothistromin (DOTH), a polyketide toxin very similar in structure to the aflatoxin precursor, versicolorin B. The first step of the pathway is the conversion of acetate to norsolorinic acid (NOR) and requires the fatty acid synthase subunits hexA and hexB, as well as the polyketide synthase pksA. PksA combines a hexanoyl starter unit and 7 malonyl-CoA extender units to synthesize the precursor NOR. The hexanoyl starter unit is provided to the acyl-carrier protein (ACP) domain by the fungal fatty acid synthase hexA/hexB. The second step is the conversion of NOR to averantin (AVN) and requires the norsolorinic acid ketoreductase nor1, which catalyzes the dehydration of norsolorinic acid to form (1'S)-averantin. The cytochrome P450 monooxygenase avnA then catalyzes the hydroxylation of AVN to 5'hydroxyaverantin (HAVN). The next step is performed by adhA that transforms HAVN to averufin (AVF). Averufin might then be converted to hydroxyversicolorone by cypX and avfA. Hydroxyversicolorone is further converted versiconal hemiacetal acetate (VHA) by moxY. VHA is then the substrate for the versiconal hemiacetal acetate esterase est1 to yield versiconal (VAL). Versicolorin B synthase vbsA then converts VAL to versicolorin B (VERB) by closing the bisfuran ring. Then, the activity of the versicolorin B desaturase verB leads to versicolorin A (VERA). DotB, a predicted chloroperoxidase, may perform epoxidation of the A-ring of VERA. Alternatively, a cytochrome P450, such as cypX or avnA could catalyze this step. It is also possible that another, uncharacterized, cytochrome P450 enzyme is responsible for this step. Opening of the epoxide could potentially be achieved by the epoxide hydrolase epoA. However, epoA seems not to be required for DOTH biosynthesis, but other epoxide hydrolases may have the ability to complement this hydrolysis. Alternatively, opening of the epoxide ring could be achieved non-enzymatically. The next step is the deoxygenation of ring A to yield the 5,8-dihydroxyanthraquinone which is most likely catalyzed by the NADPH dehydrogenase encoded by ver1. The last stages of DOTH biosynthesis are proposed to involve hydroxylation of the bisfuran. OrdB and norB might have oxidative roles here. An alternative possibility is that cytochrome P450 monoogenases such as avnA and cypX might perform these steps in addition to previously proposed steps. This is Versicolorin reductase 1 from Dothistroma septosporum (Red band needle blight fungus).